The sequence spans 430 residues: Glutamate-1-semialdehyde 2,1-aminomutase (430 aa).

Lys265 is subject to N6-(pyridoxal phosphate)lysine.

It belongs to the class-III pyridoxal-phosphate-dependent aminotransferase family. HemL subfamily. In terms of assembly, homodimer. The cofactor is pyridoxal 5'-phosphate.

Its subcellular location is the cytoplasm. The catalysed reaction is (S)-4-amino-5-oxopentanoate = 5-aminolevulinate. Its pathway is porphyrin-containing compound metabolism; protoporphyrin-IX biosynthesis; 5-aminolevulinate from L-glutamyl-tRNA(Glu): step 2/2. In Shewanella sp. (strain ANA-3), this protein is Glutamate-1-semialdehyde 2,1-aminomutase.